A 376-amino-acid polypeptide reads, in one-letter code: 4-hydroxy-3-methylbut-2-enyl diphosphate reductase (376 aa).

C19 serves as a coordination point for [4Fe-4S] cluster. The (2E)-4-hydroxy-3-methylbut-2-enyl diphosphate site is built by H48 and H99. Dimethylallyl diphosphate contacts are provided by H48 and H99. Residues H48 and H99 each coordinate isopentenyl diphosphate. C121 serves as a coordination point for [4Fe-4S] cluster. Residue H149 coordinates (2E)-4-hydroxy-3-methylbut-2-enyl diphosphate. Residue H149 participates in dimethylallyl diphosphate binding. H149 lines the isopentenyl diphosphate pocket. E151 serves as the catalytic Proton donor. T208 is a (2E)-4-hydroxy-3-methylbut-2-enyl diphosphate binding site. C236 is a [4Fe-4S] cluster binding site. 3 residues coordinate (2E)-4-hydroxy-3-methylbut-2-enyl diphosphate: S264, N266, and S307. Dimethylallyl diphosphate contacts are provided by S264, N266, and S307. Isopentenyl diphosphate is bound by residues S264, N266, and S307.

It belongs to the IspH family. [4Fe-4S] cluster is required as a cofactor.

It catalyses the reaction isopentenyl diphosphate + 2 oxidized [2Fe-2S]-[ferredoxin] + H2O = (2E)-4-hydroxy-3-methylbut-2-enyl diphosphate + 2 reduced [2Fe-2S]-[ferredoxin] + 2 H(+). The enzyme catalyses dimethylallyl diphosphate + 2 oxidized [2Fe-2S]-[ferredoxin] + H2O = (2E)-4-hydroxy-3-methylbut-2-enyl diphosphate + 2 reduced [2Fe-2S]-[ferredoxin] + 2 H(+). It functions in the pathway isoprenoid biosynthesis; dimethylallyl diphosphate biosynthesis; dimethylallyl diphosphate from (2E)-4-hydroxy-3-methylbutenyl diphosphate: step 1/1. Its pathway is isoprenoid biosynthesis; isopentenyl diphosphate biosynthesis via DXP pathway; isopentenyl diphosphate from 1-deoxy-D-xylulose 5-phosphate: step 6/6. Functionally, catalyzes the conversion of 1-hydroxy-2-methyl-2-(E)-butenyl 4-diphosphate (HMBPP) into a mixture of isopentenyl diphosphate (IPP) and dimethylallyl diphosphate (DMAPP). Acts in the terminal step of the DOXP/MEP pathway for isoprenoid precursor biosynthesis. The protein is 4-hydroxy-3-methylbut-2-enyl diphosphate reductase of Treponema pallidum (strain Nichols).